A 98-amino-acid chain; its full sequence is Protein translation factor SUI1 homolog (98 aa).

This sequence belongs to the SUI1 family.

The protein is Protein translation factor SUI1 homolog of Thermococcus onnurineus (strain NA1).